Here is a 418-residue protein sequence, read N- to C-terminus: Putative ion-transport protein YfeO (418 aa).

Helical transmembrane passes span 10 to 30 (LLLS…LIVV), 54 to 74 (DSPL…GLVI), 99 to 119 (ALPG…SLGP), 120 to 140 (EHPI…RLLP), 149 to 169 (ILAS…AALI), 186 to 206 (LFAP…FFHP), 223 to 243 (ILSG…AVWC), 258 to 278 (VLVL…GGPV), 300 to 320 (DYFL…ASGF), 322 to 342 (GGRI…LHEH), 343 to 363 (VPAV…VLVV), and 371 to 391 (LFMA…CIVM).

Belongs to the chloride channel (TC 2.A.49) family.

It is found in the cell membrane. The sequence is that of Putative ion-transport protein YfeO from Shigella boydii serotype 18 (strain CDC 3083-94 / BS512).